The following is a 307-amino-acid chain: Olfactory receptor 8K5 (307 aa).

Residues 1–25 lie on the Extracellular side of the membrane; the sequence is MGQHNLTVLTEFILMELTRRPELQI. A glycan (N-linked (GlcNAc...) asparagine) is linked at N5. Residues 26 to 46 form a helical membrane-spanning segment; the sequence is PLFGVFLVIYLITVVGNLTMI. Residues 47–54 are Cytoplasmic-facing; that stretch reads ILTKLDSH. Residues 55–75 form a helical membrane-spanning segment; the sequence is LHTPMYFSIRHLAFVDLGNST. The Extracellular portion of the chain corresponds to 76–99; it reads VICPKVLANFVVDRNTISYYACAA. A disulfide bond links C97 and C189. A helical transmembrane segment spans residues 100 to 120; the sequence is QLAFFLMFIISEFFILSAMAY. Topologically, residues 121–139 are cytoplasmic; the sequence is DRYVAICNPLLYYVIMSQR. A helical membrane pass occupies residues 140-160; that stretch reads LCHVLVGIQYLYSTFQALMFT. The Extracellular segment spans residues 161 to 197; that stretch reads IKIFTLTFCGSNVISHFYCDDVPLLPMLCSNAQEIEL. Residues 198–217 form a helical membrane-spanning segment; that stretch reads LSILFSVFNLISSFLIVLVS. The Cytoplasmic segment spans residues 218–237; the sequence is YMLILLAICQMHSAEGRKKA. Residues 238 to 258 form a helical membrane-spanning segment; the sequence is FSTCGSHLTVVVVFYGSLLFM. Over 259–271 the chain is Extracellular; it reads YMQPNSTHFFDTD. N263 carries an N-linked (GlcNAc...) asparagine glycan. Residues 272–292 traverse the membrane as a helical segment; sequence KMASVFYTLVIPMLNPLIYSL. Residues 293–307 are Cytoplasmic-facing; the sequence is RNEEVKNAFYKLFEN.

It belongs to the G-protein coupled receptor 1 family.

Its subcellular location is the cell membrane. Functionally, odorant receptor. The polypeptide is Olfactory receptor 8K5 (OR8K5) (Homo sapiens (Human)).